The sequence spans 178 residues: Large ribosomal subunit protein eL20x (178 aa).

This sequence belongs to the eukaryotic ribosomal protein eL20 family.

The sequence is that of Large ribosomal subunit protein eL20x (RPL18AC) from Arabidopsis thaliana (Mouse-ear cress).